Here is a 161-residue protein sequence, read N- to C-terminus: S-ribosylhomocysteine lyase (161 aa).

Fe cation contacts are provided by His57, His61, and Cys127.

This sequence belongs to the LuxS family. In terms of assembly, homodimer. Requires Fe cation as cofactor.

It carries out the reaction S-(5-deoxy-D-ribos-5-yl)-L-homocysteine = (S)-4,5-dihydroxypentane-2,3-dione + L-homocysteine. Involved in the synthesis of autoinducer 2 (AI-2) which is secreted by bacteria and is used to communicate both the cell density and the metabolic potential of the environment. The regulation of gene expression in response to changes in cell density is called quorum sensing. Catalyzes the transformation of S-ribosylhomocysteine (RHC) to homocysteine (HC) and 4,5-dihydroxy-2,3-pentadione (DPD). This Streptococcus equi subsp. equi (strain 4047) protein is S-ribosylhomocysteine lyase.